A 314-amino-acid polypeptide reads, in one-letter code: tRNA pseudouridine synthase B (314 aa).

Asp47 (nucleophile) is an active-site residue.

Belongs to the pseudouridine synthase TruB family. Type 1 subfamily.

The enzyme catalyses uridine(55) in tRNA = pseudouridine(55) in tRNA. Responsible for synthesis of pseudouridine from uracil-55 in the psi GC loop of transfer RNAs. This is tRNA pseudouridine synthase B from Vibrio campbellii (strain ATCC BAA-1116).